The primary structure comprises 616 residues: MPKYRSATTTHGRNMAGARALWRATGMTDDDFGKPIIAVVNSFTQFVPGHVHLRDLGKLVAEEIEASGGVAKEFNTIAVDDGIAMGHGGMLYSLPSRELIADSVEYMVNAHCADAMVCISNCDKITPGMLMASLRLNIPVIFVSGGPMEAGKTKLSDKIIKLDLVDAMIQGANPNVSDADSDQIERSACPTCGSCSGMFTANSMNCLTEALGLSQPGNGSLLATHADRRELFLNAGRRIVALTKRYYEQDDESALPRNIASKAAFENAMTLDIAMGGSTNTVLHLLAAAQEGEIDFDISDIDRLSRLVPHLCKVAPSTPKYHMEDVHRAGGVLGILGELDRAGLMDNSVRNILGLSLRETLDRYDIMLTQDDAVKKMFRAGPAGIRTTQAFSQDTRWETLDDDRQHGCIRAREFAFSQDGGLAVLYGNLAENGCIVKTAGVDEGSLVFSGPAKVYESQDDAVAAILGGKVVAGDVVVIRYEGPKGGPGMQEMLYPTTYLKSMGLGKACALITDGRFSGGTSGLSIGHASPEAASGGTIALVKDGDIINIDIPQRGIQLDVAENELAARRLEEDARGEAAYTPHGRERQVSFALRAYATLATSADKGAVRDKSKLGG.

Residue D81 participates in Mg(2+) binding. Residue C122 coordinates [2Fe-2S] cluster. Mg(2+) contacts are provided by D123 and K124. An N6-carboxylysine modification is found at K124. C195 is a [2Fe-2S] cluster binding site. E491 is a binding site for Mg(2+). The Proton acceptor role is filled by S517.

The protein belongs to the IlvD/Edd family. Homodimer. The cofactor is [2Fe-2S] cluster. Requires Mg(2+) as cofactor.

It carries out the reaction (2R)-2,3-dihydroxy-3-methylbutanoate = 3-methyl-2-oxobutanoate + H2O. It catalyses the reaction (2R,3R)-2,3-dihydroxy-3-methylpentanoate = (S)-3-methyl-2-oxopentanoate + H2O. The protein operates within amino-acid biosynthesis; L-isoleucine biosynthesis; L-isoleucine from 2-oxobutanoate: step 3/4. Its pathway is amino-acid biosynthesis; L-valine biosynthesis; L-valine from pyruvate: step 3/4. Functionally, functions in the biosynthesis of branched-chain amino acids. Catalyzes the dehydration of (2R,3R)-2,3-dihydroxy-3-methylpentanoate (2,3-dihydroxy-3-methylvalerate) into 2-oxo-3-methylpentanoate (2-oxo-3-methylvalerate) and of (2R)-2,3-dihydroxy-3-methylbutanoate (2,3-dihydroxyisovalerate) into 2-oxo-3-methylbutanoate (2-oxoisovalerate), the penultimate precursor to L-isoleucine and L-valine, respectively. The chain is Dihydroxy-acid dehydratase from Erwinia tasmaniensis (strain DSM 17950 / CFBP 7177 / CIP 109463 / NCPPB 4357 / Et1/99).